The sequence spans 210 residues: Superoxide dismutase [Mn], mitochondrial (210 aa).

Positions 29, 77, 164, and 168 each coordinate Mn(2+).

It belongs to the iron/manganese superoxide dismutase family. In terms of assembly, homotetramer. It depends on Mn(2+) as a cofactor.

Its subcellular location is the mitochondrion matrix. The catalysed reaction is 2 superoxide + 2 H(+) = H2O2 + O2. Functionally, destroys superoxide anion radicals which are normally produced within the cells and which are toxic to biological systems. This Aspergillus oryzae (strain ATCC 42149 / RIB 40) (Yellow koji mold) protein is Superoxide dismutase [Mn], mitochondrial (sodB).